The primary structure comprises 381 residues: MNAPQKHSAPITVEVALGDRAYEIVIGRDVIASLGERIAKLRPGARTAIVTDRTVAKTWLKRTEEVLDQVGIAHASVIVGEGESSKSYAGLEQVCEALIAAKIERNDLVIALGGGVIGDLAGFSASLLRRGVDFVQVPTSLLAQVDSSVGGKTGINSPQGKNLIGTFHQPVLVLADTAILDTLSPRQFRAGYAEVAKYGALGDEAFFAWLEANHAELFSGGAAREHAVATSCRAKAAIVARDERETGDRALLNLGHTFGHALEAATGFSDRLFHGEGVAIGMVLAAEFSAERGMMPAADAQRLAKHLADVGLPTRLQDIAGFTQEGLADADRLMALMSQDKKVKRGELTFILMEGIGRAVIANKVEPAPVRDFLQRKLAQA.

Residues 81–86 (EGESSK), 115–119 (GVIGD), 139–140 (TS), K152, and K161 each bind NAD(+). Positions 194, 256, and 274 each coordinate Zn(2+).

The protein belongs to the sugar phosphate cyclases superfamily. Dehydroquinate synthase family. The cofactor is Co(2+). Requires Zn(2+) as cofactor. NAD(+) is required as a cofactor.

Its subcellular location is the cytoplasm. It carries out the reaction 7-phospho-2-dehydro-3-deoxy-D-arabino-heptonate = 3-dehydroquinate + phosphate. It participates in metabolic intermediate biosynthesis; chorismate biosynthesis; chorismate from D-erythrose 4-phosphate and phosphoenolpyruvate: step 2/7. In terms of biological role, catalyzes the conversion of 3-deoxy-D-arabino-heptulosonate 7-phosphate (DAHP) to dehydroquinate (DHQ). The protein is 3-dehydroquinate synthase of Rhodopseudomonas palustris (strain TIE-1).